Reading from the N-terminus, the 129-residue chain is Glycine cleavage system H protein (129 aa).

A Lipoyl-binding domain is found at 24–106; it reads TYTVGITEHA…YAGGWIFKIK (83 aa). N6-lipoyllysine is present on lysine 65.

The protein belongs to the GcvH family. The glycine cleavage system is composed of four proteins: P, T, L and H. Requires (R)-lipoate as cofactor.

Its function is as follows. The glycine cleavage system catalyzes the degradation of glycine. The H protein shuttles the methylamine group of glycine from the P protein to the T protein. The protein is Glycine cleavage system H protein of Shigella dysenteriae serotype 1 (strain Sd197).